Reading from the N-terminus, the 126-residue chain is Late histone H2A.3, gonadal (126 aa).

Residues Met-1–Ser-18 are compositionally biased toward basic residues. Positions Met-1 to Ala-21 are disordered. An N-acetylserine modification is found at Ser-2. Ser-2 carries the post-translational modification Phosphoserine. Residue Gln-104 is modified to N5-methylglutamine. Lys-119 participates in a covalent cross-link: Glycyl lysine isopeptide (Lys-Gly) (interchain with G-Cter in ubiquitin).

The protein belongs to the histone H2A family. As to quaternary structure, the nucleosome is a histone octamer containing two molecules each of H2A, H2B, H3 and H4 assembled in one H3-H4 heterotetramer and two H2A-H2B heterodimers. The octamer wraps approximately 147 bp of DNA. In terms of processing, monoubiquitination of Lys-119 gives a specific tag for epigenetic transcriptional repression. Phosphorylation of Ser-2 directly represses transcription.

It localises to the nucleus. The protein localises to the chromosome. Its function is as follows. Core component of nucleosome. Nucleosomes wrap and compact DNA into chromatin, limiting DNA accessibility to the cellular machineries which require DNA as a template. Histones thereby play a central role in transcription regulation, DNA repair, DNA replication and chromosomal stability. DNA accessibility is regulated via a complex set of post-translational modifications of histones, also called histone code, and nucleosome remodeling. This Psammechinus miliaris (Green sea urchin) protein is Late histone H2A.3, gonadal.